Consider the following 205-residue polypeptide: Pyrrolidone-carboxylate peptidase (205 aa).

Residues Glu78, Cys141, and His165 contribute to the active site.

It belongs to the peptidase C15 family. In terms of assembly, homotetramer.

It localises to the cytoplasm. It carries out the reaction Release of an N-terminal pyroglutamyl group from a polypeptide, the second amino acid generally not being Pro.. Its function is as follows. Removes 5-oxoproline from various penultimate amino acid residues except L-proline. In Thermosipho africanus (strain TCF52B), this protein is Pyrrolidone-carboxylate peptidase.